The sequence spans 214 residues: Thiamine-phosphate synthase (214 aa).

4-amino-2-methyl-5-(diphosphooxymethyl)pyrimidine contacts are provided by residues 39–43 (QYRFK) and Asn71. Residues Asp72 and Asp91 each contribute to the Mg(2+) site. Residue Ser110 coordinates 4-amino-2-methyl-5-(diphosphooxymethyl)pyrimidine. 2-[(2R,5Z)-2-carboxy-4-methylthiazol-5(2H)-ylidene]ethyl phosphate is bound at residue 136–138 (TKT). Lys139 is a binding site for 4-amino-2-methyl-5-(diphosphooxymethyl)pyrimidine. Residues Gly166 and 186–187 (VS) contribute to the 2-[(2R,5Z)-2-carboxy-4-methylthiazol-5(2H)-ylidene]ethyl phosphate site.

It belongs to the thiamine-phosphate synthase family. Requires Mg(2+) as cofactor.

It catalyses the reaction 2-[(2R,5Z)-2-carboxy-4-methylthiazol-5(2H)-ylidene]ethyl phosphate + 4-amino-2-methyl-5-(diphosphooxymethyl)pyrimidine + 2 H(+) = thiamine phosphate + CO2 + diphosphate. The enzyme catalyses 2-(2-carboxy-4-methylthiazol-5-yl)ethyl phosphate + 4-amino-2-methyl-5-(diphosphooxymethyl)pyrimidine + 2 H(+) = thiamine phosphate + CO2 + diphosphate. The catalysed reaction is 4-methyl-5-(2-phosphooxyethyl)-thiazole + 4-amino-2-methyl-5-(diphosphooxymethyl)pyrimidine + H(+) = thiamine phosphate + diphosphate. The protein operates within cofactor biosynthesis; thiamine diphosphate biosynthesis; thiamine phosphate from 4-amino-2-methyl-5-diphosphomethylpyrimidine and 4-methyl-5-(2-phosphoethyl)-thiazole: step 1/1. In terms of biological role, condenses 4-methyl-5-(beta-hydroxyethyl)thiazole monophosphate (THZ-P) and 2-methyl-4-amino-5-hydroxymethyl pyrimidine pyrophosphate (HMP-PP) to form thiamine monophosphate (TMP). In Hydrogenobaculum sp. (strain Y04AAS1), this protein is Thiamine-phosphate synthase.